A 101-amino-acid polypeptide reads, in one-letter code: U1-sicaritoxin-Li1a (101 aa).

Positions 1–19 are cleaved as a signal peptide; that stretch reads MRFLVGAVLVVVLVACATA. A propeptide spanning residues 20–35 is cleaved from the precursor; the sequence is FESDAETFKSLVVEER. 4 disulfide bridges follow: Cys-37/Cys-54, Cys-45/Cys-59, Cys-53/Cys-72, and Cys-61/Cys-70. Lys-81 carries the post-translational modification Lysine amide. The propeptide occupies 85-101; it reads ALLLPVETHRLLFPEQW.

The protein belongs to the neurotoxin 28 (Litx) family. In terms of tissue distribution, expressed by the venom gland.

It is found in the secreted. In terms of biological role, toxin active against insects (S.frugiperda larvae). May act on sodium (Nav) or calcium channels (Cav). The protein is U1-sicaritoxin-Li1a of Loxosceles intermedia (Brown spider).